Reading from the N-terminus, the 293-residue chain is MAQEKPGCSNPVPNGDCPIIEKMEKRTCALCPEGHEWSQIYFSPSANIVAHENCLLYSSGLVECEAPDLPNTVRNFDVKSVKKEIGRGRRLKCSFCKNKGATMGYDLQSCTKNYHLSCAMEDHAILQVDEDHGTYKLFCQKHAPEGQEPTQRDAAVKAPFLKKCQEAGLLNVLLEYILEKMDLIHGRLLNETASESDYEGIETLLFGCGLFGDTLRKFQEVINSKACEWEERQRLMKQQLEALADLQQNLCSFQENGDLDCSSSTSGSLLPPEDHQVRCQESPEVQAGSGDSL.

The C2HC pre-PHD-type zinc finger occupies 25 to 61; that stretch reads KRTCALCPEGHEWSQIYFSPSANIVAHENCLLYSSGL. A PHD-type; degenerate zinc finger spans residues 91–143; it reads LKCSFCKNKGATMGYDLQSCTKNYHLSCAMEDHAILQVDEDHGTYKLFCQKHA. A disordered region spans residues 262–293; sequence SSSTSGSLLPPEDHQVRCQESPEVQAGSGDSL.

The protein resides in the nucleus. The sequence is that of PHD finger protein 11A (Phf11a) from Mus musculus (Mouse).